Consider the following 354-residue polypeptide: Tyrosine recombinase XerH (354 aa).

Positions 48–134 constitute a Core-binding (CB) domain; it reads LTKGVKNIDE…AVINFFDFLD (87 aa). A Tyr recombinase domain is found at 163–346; it reads KLPEFMSKEE…DNDKLKLAAQ (184 aa). Catalysis depends on residues Arg205, Lys231, His298, Arg301, and His324. The active-site O-(3'-phospho-DNA)-tyrosine intermediate is the Tyr333.

Belongs to the 'phage' integrase family. XerH subfamily.

The protein localises to the cytoplasm. Its activity is regulated as follows. FtsK is required for efficient recombination. Functionally, site-specific tyrosine recombinase, which acts by catalyzing the cutting and rejoining of the recombining DNA molecules. Binds to the complete atypical dif motif (difH) site and to both halves separately. The polypeptide is Tyrosine recombinase XerH (Campylobacter jejuni subsp. jejuni serotype O:2 (strain ATCC 700819 / NCTC 11168)).